A 452-amino-acid chain; its full sequence is Translation initiation factor eIF2B subunit gamma (452 aa).

At methionine 1 the chain carries N-acetylmethionine. Serine 260 carries the post-translational modification Phosphoserine.

The protein belongs to the eIF-2B gamma/epsilon subunits family. Component of the translation initiation factor 2B (eIF2B) complex which is a heterodecamer of two sets of five different subunits: alpha, beta, gamma, delta and epsilon. Subunits alpha, beta and delta comprise a regulatory subcomplex and subunits epsilon and gamma comprise a catalytic subcomplex. Within the complex, the hexameric regulatory complex resides at the center, with the two heterodimeric catalytic subcomplexes bound on opposite sides.

It is found in the cytoplasm. The protein resides in the cytosol. Activated by the chemical integrated stress response (ISR) inhibitor ISRIB which stimulates guanine nucleotide exchange factor activity for both phosphorylated and unphosphorylated eIF2. Acts as a component of the translation initiation factor 2B (eIF2B) complex, which catalyzes the exchange of GDP for GTP on the eukaryotic initiation factor 2 (eIF2) complex gamma subunit. Its guanine nucleotide exchange factor activity is repressed when bound to eIF2 complex phosphorylated on the alpha subunit, thereby limiting the amount of methionyl-initiator methionine tRNA available to the ribosome and consequently global translation is repressed. This Macaca fascicularis (Crab-eating macaque) protein is Translation initiation factor eIF2B subunit gamma (EIF2B3).